A 319-amino-acid chain; its full sequence is Glycine--tRNA ligase alpha subunit (319 aa).

This sequence belongs to the class-II aminoacyl-tRNA synthetase family. As to quaternary structure, tetramer of two alpha and two beta subunits.

The protein localises to the cytoplasm. The catalysed reaction is tRNA(Gly) + glycine + ATP = glycyl-tRNA(Gly) + AMP + diphosphate. This Oenococcus oeni (strain ATCC BAA-331 / PSU-1) protein is Glycine--tRNA ligase alpha subunit.